A 326-amino-acid chain; its full sequence is Aspartate carbamoyltransferase catalytic subunit (326 aa).

Residues Arg-58 and Thr-59 each contribute to the carbamoyl phosphate site. Residue Lys-86 coordinates L-aspartate. Carbamoyl phosphate-binding residues include Arg-108, His-141, and Gln-144. Residues Arg-181 and Arg-239 each contribute to the L-aspartate site. Residues Gly-280 and Pro-281 each contribute to the carbamoyl phosphate site.

The protein belongs to the aspartate/ornithine carbamoyltransferase superfamily. ATCase family. Heterododecamer (2C3:3R2) of six catalytic PyrB chains organized as two trimers (C3), and six regulatory PyrI chains organized as three dimers (R2).

The catalysed reaction is carbamoyl phosphate + L-aspartate = N-carbamoyl-L-aspartate + phosphate + H(+). The protein operates within pyrimidine metabolism; UMP biosynthesis via de novo pathway; (S)-dihydroorotate from bicarbonate: step 2/3. In terms of biological role, catalyzes the condensation of carbamoyl phosphate and aspartate to form carbamoyl aspartate and inorganic phosphate, the committed step in the de novo pyrimidine nucleotide biosynthesis pathway. This chain is Aspartate carbamoyltransferase catalytic subunit, found in Synechococcus sp. (strain JA-2-3B'a(2-13)) (Cyanobacteria bacterium Yellowstone B-Prime).